Here is a 136-residue protein sequence, read N- to C-terminus: uncharacterized protein (136 aa).

It belongs to the mimivirus L163/R849 family.

This is an uncharacterized protein from Acanthamoeba polyphaga mimivirus (APMV).